A 744-amino-acid chain; its full sequence is 4'-phospho-dehydrooxetanocin synthase (744 aa).

Residues 119–259 form the B12-binding domain; that stretch reads TVTLVNLCVI…KMLKKELKLD (141 aa). Arginine 135, serine 139, serine 184, glycine 241, glutamate 242, and glutamate 308 together coordinate cob(II)alamin. The Radical SAM core domain occupies 299 to 545; that stretch reads SKFRGALTLE…IVSYMLASME (247 aa). [4Fe-4S] cluster contacts are provided by cysteine 313, cysteine 318, and cysteine 321. Cob(II)alamin is bound by residues proline 322, histidine 325, lysine 326, alanine 361, and glutamate 363. The S-adenosyl-L-methionine site is built by glutamate 436 and glutamate 545.

It belongs to the radical SAM superfamily. [4Fe-4S] cluster serves as cofactor. It depends on cob(II)alamin as a cofactor.

It catalyses the reaction dAMP + S-adenosyl-L-methionine = 4'-phospho-dehydrooxetanocin + 5'-deoxyadenosine + L-methionine + H(+). The enzyme catalyses AH2 + 2 S-adenosyl-L-methionine = 2 5'-deoxyadenosin-5'-yl radical + 2 L-methionine + A + 2 H(+). It carries out the reaction 2 5'-deoxyadenosin-5'-yl radical + 2 dAMP + A = 2 4'-phospho-dehydrooxetanocin + 2 5'-deoxyadenosine + AH2. Its activity is regulated as follows. Requires OxsA for the oxidative ring contraction activity. Activation of OxsB requires its direct interaction with OxsA and is independent of OxsA phosphohydrolase activity. In contrast to ring contraction, methylation does not require the presence of OxsA. In terms of biological role, isomerase involved in the biosynthesis of oxetanocin A (OXT-A), a nucleoside analog with antitumor, antiviral and antibacterial properties. Catalyzes an oxidative ring contraction of dAMP, forming an oxetane aldehyde. In addition, shows methyltransferase activity in vitro and is able to catalyze the radical mediated, stereoselective C2'-methylation of dAMP to form methylated 2'-dAMP. Also catalyzes the demethylation of S-adenosyl-L-methionine (SAM) to S-adenosyl-L-homocysteine (SAH). This chain is 4'-phospho-dehydrooxetanocin synthase, found in Priestia megaterium (Bacillus megaterium).